An 887-amino-acid polypeptide reads, in one-letter code: MSGVNDIRSAFLDFFKKNGHEVVASGPLVPRNDPTLMFTNAGMVQFKNVFTGMETRPYNRATTAQKCVRAGGKHNDLDNVGYTARHHTFFEMLGNFSFGDYFKDVAIELAWNLVTKEFGLDPKRLLVTVYHTDDEAAGHWRKIAGLPEERIIRIPTSDNFWAMGDTGPCGPCSEIFFDHGEGIPGGPPGSPDEDGDRFIEIWNLVFMQYEQVSPDERINLPRPSIDTGMGLERVAAVLQGVHDNYEIDLFKALIHATEEAVGVRAEGERRPSYKVIADHLRASSFLIADGVLPSNEGRGYVLRRIMRRAMRHAQLLGAEEPLMWRLVPALVREMGQAYPELVRGEALITETLKLEETRFRKTLARGLNLLSDATGGMGEGDRLDGETAFKLYDTYGFPLDLTQDALRQRGVTVDLEGFNAAMERQKAEARASWAGSGEAATEAVWFSVKDRTGATDFLGYETEEAEGIIAALVKDGAMVETAAEGEEVAVVTNQTPFYGESGGQVGDTGTIEGEGFAIEIKNTQKKGEGLFVHFGQVKKGTVRISEPVSLRVDHERRTRIRANHSATHLLHEALREVLGTHVAQKGSLVAPDRLRFDFSHPKPIAEEELQQIEDLANEVVLQNAPVVTRLMAVDDAIAEGAMALFGEKYGDEVRVVSMGKGTQGEKSGKTYSLELCGGTHVNATGDIGLVHIIGEGAVAAGVRRVEALTGAAARRYLDEQERRLKAAASVLKVSPGDLLPRLETLVEERRKLERELSEARKKLALGGGAGAKAGEEREEVGGVGFIGRVVEGISPKDLKPLADEGKKSLGSGVVVFVGTSEEGKASVVVGVTDDLTGRFSAVDLVRKASAAIGGQGGGGRPDMAQAGGPDAANAAAAVEAVRAALAG.

His564, His568, Cys676, and His680 together coordinate Zn(2+).

This sequence belongs to the class-II aminoacyl-tRNA synthetase family. Zn(2+) serves as cofactor.

Its subcellular location is the cytoplasm. It catalyses the reaction tRNA(Ala) + L-alanine + ATP = L-alanyl-tRNA(Ala) + AMP + diphosphate. In terms of biological role, catalyzes the attachment of alanine to tRNA(Ala) in a two-step reaction: alanine is first activated by ATP to form Ala-AMP and then transferred to the acceptor end of tRNA(Ala). Also edits incorrectly charged Ser-tRNA(Ala) and Gly-tRNA(Ala) via its editing domain. The chain is Alanine--tRNA ligase from Chelativorans sp. (strain BNC1).